The primary structure comprises 232 residues: MSAQADRVMDLSEWENRWQEGRTGFHRSDVHNLLKANVDKLICGRREVRFFFPLCGKAVDMKWLADMGHTVVGVEFSEKGIKEFSQEQNLEYNEEAVADIPGAKLFKSTDGKISIYQCDLYKFSSAVAGHFGGIWDRGALVAINPCDRQKYASLLVSLMSSDCRYLLDTLEYNPELYKGPPFFVSEDDIKTVFGGSCNIDLLQSVDGFEEKHRSWGLDSLTEKLYLLTTKTQ.

S-adenosyl-L-methionine contacts are provided by residues 14–25, Leu54, Glu75, and Arg137; that span reads WENRWQEGRTGF. Phe25 contributes to the substrate binding site.

This sequence belongs to the class I-like SAM-binding methyltransferase superfamily. TPMT family.

It is found in the cytoplasm. The enzyme catalyses S-adenosyl-L-methionine + a thiopurine = S-adenosyl-L-homocysteine + a thiopurine S-methylether.. This chain is Probable thiopurine S-methyltransferase (tpmt), found in Danio rerio (Zebrafish).